The sequence spans 306 residues: 4-hydroxy-3-methylbut-2-enyl diphosphate reductase 1 (306 aa).

C10 contributes to the [4Fe-4S] cluster binding site. The (2E)-4-hydroxy-3-methylbut-2-enyl diphosphate site is built by H39 and H72. Residues H39 and H72 each coordinate dimethylallyl diphosphate. Positions 39 and 72 each coordinate isopentenyl diphosphate. C94 serves as a coordination point for [4Fe-4S] cluster. H122 provides a ligand contact to (2E)-4-hydroxy-3-methylbut-2-enyl diphosphate. H122 lines the dimethylallyl diphosphate pocket. H122 contributes to the isopentenyl diphosphate binding site. The active-site Proton donor is the E124. Position 162 (T162) interacts with (2E)-4-hydroxy-3-methylbut-2-enyl diphosphate. C192 provides a ligand contact to [4Fe-4S] cluster. Residues S220, S221, N222, and S264 each contribute to the (2E)-4-hydroxy-3-methylbut-2-enyl diphosphate site. Dimethylallyl diphosphate-binding residues include S220, S221, N222, and S264. S220, S221, N222, and S264 together coordinate isopentenyl diphosphate.

The protein belongs to the IspH family. Requires [4Fe-4S] cluster as cofactor.

It carries out the reaction isopentenyl diphosphate + 2 oxidized [2Fe-2S]-[ferredoxin] + H2O = (2E)-4-hydroxy-3-methylbut-2-enyl diphosphate + 2 reduced [2Fe-2S]-[ferredoxin] + 2 H(+). The enzyme catalyses dimethylallyl diphosphate + 2 oxidized [2Fe-2S]-[ferredoxin] + H2O = (2E)-4-hydroxy-3-methylbut-2-enyl diphosphate + 2 reduced [2Fe-2S]-[ferredoxin] + 2 H(+). The protein operates within isoprenoid biosynthesis; dimethylallyl diphosphate biosynthesis; dimethylallyl diphosphate from (2E)-4-hydroxy-3-methylbutenyl diphosphate: step 1/1. It functions in the pathway isoprenoid biosynthesis; isopentenyl diphosphate biosynthesis via DXP pathway; isopentenyl diphosphate from 1-deoxy-D-xylulose 5-phosphate: step 6/6. Catalyzes the conversion of 1-hydroxy-2-methyl-2-(E)-butenyl 4-diphosphate (HMBPP) into a mixture of isopentenyl diphosphate (IPP) and dimethylallyl diphosphate (DMAPP). Acts in the terminal step of the DOXP/MEP pathway for isoprenoid precursor biosynthesis. The sequence is that of 4-hydroxy-3-methylbut-2-enyl diphosphate reductase 1 from Rhodopseudomonas palustris (strain ATCC BAA-98 / CGA009).